We begin with the raw amino-acid sequence, 203 residues long: MSSKLRVGVAGPVGSGKTALVETLCLSLKKNYEIAIVTNDIFTKEDANFLINKKVLEEGRIIGVETGGCPHTAIREDCSLNKNAVLDLENKYNPLDFVFVESGGDNLASSFSPELVDLSIYVIDVSAGDKIPRKGGPGITRSDLLLINKIDLADKVGADLNIMKSDTEFMRKGKPWFFTNLSIGIGVEEITQFLESHIPNNRN.

11-18 (GPVGSGKT) contributes to the GTP binding site.

It belongs to the SIMIBI class G3E GTPase family. UreG subfamily. As to quaternary structure, homodimer. UreD, UreF and UreG form a complex that acts as a GTP-hydrolysis-dependent molecular chaperone, activating the urease apoprotein by helping to assemble the nickel containing metallocenter of UreC. The UreE protein probably delivers the nickel.

It localises to the cytoplasm. Facilitates the functional incorporation of the urease nickel metallocenter. This process requires GTP hydrolysis, probably effectuated by UreG. This chain is Urease accessory protein UreG, found in Prochlorococcus marinus (strain MIT 9301).